The chain runs to 420 residues: 3-oxoacyl-[acyl-carrier-protein] synthase 2 (420 aa).

Residues 13–419 (FPNVVVTGIA…GHNVAIAFGC (407 aa)) form the Ketosynthase family 3 (KS3) domain. Residues cysteine 173, histidine 314, and histidine 349 each act as for beta-ketoacyl synthase activity in the active site.

It belongs to the thiolase-like superfamily. Beta-ketoacyl-ACP synthases family.

It is found in the cytoplasm. The enzyme catalyses an ultra-long-chain di-unsaturated fatty acyl-[ACP] + malonyl-[ACP] + H(+) = a 3-oxo-ultra-long-chain di-unsaturated fatty acyl-[ACP] + holo-[ACP] + CO2. Its pathway is lipid metabolism; mycolic acid biosynthesis. Functionally, part of the mycobacterial fatty acid elongation system FAS-II, which is involved in mycolic acid biosynthesis. Catalyzes the elongation of long chain acyl-ACP substrates by the addition of two carbons from malonyl-ACP to an acyl acceptor. Involved in extension of the mycolate chains to full lengths and produces longer chain multiunsaturated hydrocarbons averaging 54 carbons in length. The protein is 3-oxoacyl-[acyl-carrier-protein] synthase 2 (kasB) of Mycobacterium leprae (strain TN).